We begin with the raw amino-acid sequence, 346 residues long: Upstream stimulatory factor 2 (346 aa).

Disordered stretches follow at residues 1 to 44 and 215 to 244; these read MDML…PGAE and APRTHPYSPKIDGTRTPRDERRRAQHNEVE. Residues 11-20 show a composition bias toward low complexity; sequence AASATAAAAA. Residues 226–244 show a composition bias toward basic and acidic residues; it reads DGTRTPRDERRRAQHNEVE. Residues 235–290 form the bHLH domain; that stretch reads RRRAQHNEVERRRRDKINNWIVQLSKIIPDCNADNSKTGASKGGILSKACDYIREL. Positions 307–328 are leucine-zipper; that stretch reads LQMDNELLRQQIEELKNENALL.

In terms of assembly, interacts with MAF. Efficient DNA binding requires dimerization with another bHLH protein. Binds DNA as a homodimer or a heterodimer (USF1/USF2). In vivo, the USF1/USF2A heterodimer represents over 66% of the usf binding activity whereas the USF1 and USF2A homodimers represent less than 10%. The USF1/USF2B heterodimer accounted for almost 15% in some cell. In terms of tissue distribution, ubiquitous.

It is found in the nucleus. Its function is as follows. Transcription factor that binds to a symmetrical DNA sequence (E-boxes) (5'-CACGTG-3') that is found in a variety of viral and cellular promoters. This Homo sapiens (Human) protein is Upstream stimulatory factor 2 (USF2).